Reading from the N-terminus, the 256-residue chain is tRNA (guanine-N(7)-)-methyltransferase (256 aa).

Residues Glu85, Glu110, Asp137, and Asp159 each coordinate S-adenosyl-L-methionine. Asp159 is an active-site residue. Residues Lys163 and Asp195 each contribute to the substrate site.

This sequence belongs to the class I-like SAM-binding methyltransferase superfamily. TrmB family.

The catalysed reaction is guanosine(46) in tRNA + S-adenosyl-L-methionine = N(7)-methylguanosine(46) in tRNA + S-adenosyl-L-homocysteine. The protein operates within tRNA modification; N(7)-methylguanine-tRNA biosynthesis. In terms of biological role, catalyzes the formation of N(7)-methylguanine at position 46 (m7G46) in tRNA. The polypeptide is tRNA (guanine-N(7)-)-methyltransferase (Rhodopseudomonas palustris (strain HaA2)).